The following is a 237-amino-acid chain: Thrombin-like enzyme agkihpin-2 (237 aa).

Residue Met-1 is a propeptide. The Peptidase S1 domain maps to 2-228 (ILGDDECNIN…HLDWIENIIA (227 aa)). A disulfide bridge connects residues Cys-27 and Cys-43. The active-site Charge relay system is His-42. N-linked (GlcNAc...) asparagine glycosylation is present at Asn-80. The active-site Charge relay system is the Asp-87. 3 cysteine pairs are disulfide-bonded: Cys-119/Cys-189, Cys-151/Cys-168, and Cys-179/Cys-204. Ser-183 serves as the catalytic Charge relay system.

This sequence belongs to the peptidase S1 family. Snake venom subfamily. As to expression, expressed by the venom gland (at protein level). Expressed by the venom gland.

The protein localises to the secreted. With respect to regulation, the hydrolysis of TAMe (tosyl-arginine methyl ester) substrate is activated by Ca(2+), Fe(3+), Mg(2+) and Zn(2+), and inhibited by EDTA, PMSF and DTT. In terms of biological role, thrombin-like enzyme that shows fibrinogenolytic activity against bovine fibrinogen alpha and beta chains, but not gamma chain. Hydrolyzes fibrin. Enhances ADP-induced human platelet aggregation. Has arginine esterase activity for TAMe (tosyl-arginine methyl ester) substrate. Reduces thrombin-induced thrombosis. Does not have hemorrhagic activity. Reduces the motility of human liver cancer HepG2 cells in a wound-healing assay. This chain is Thrombin-like enzyme agkihpin-2, found in Gloydius halys (Chinese water mocassin).